A 4423-amino-acid chain; its full sequence is Nonribosomal peptide synthetase 7 (4423 aa).

Residues 572 to 986 (NIYPCTSIQE…LISQDDKNRI (415 aa)) are condensation 1. An adenylation 1 region spans residues 1007-1404 (ERIQKQPSAV…GRRDTQVKIR (398 aa)). Residues 1533-1609 (LPLTETEQKL…DLARTIDERN (77 aa)) enclose the Carrier 1 domain. Position 1570 is an O-(pantetheine 4'-phosphoryl)serine (serine 1570). Residues 1657 to 2066 (EDVYPCTSLQ…QFLDETHHET (410 aa)) are condensation 2. The interval 2102 to 2499 (RDVAKEQPDS…YIGRMGSEVK (398 aa)) is adenylation 2. In terms of domain architecture, Carrier 2 spans 2642 to 2718 (VPQTRIGKKL…DCARILEADQ (77 aa)). At serine 2679 the chain carries O-(pantetheine 4'-phosphoryl)serine. The tract at residues 2764–3170 (EDVYPCTPMQ…AASASSDDQT (407 aa)) is condensation 3. Positions 3205 to 3609 (RSLETRPDSQ…GRGDSQIKIR (405 aa)) are adenylation 3. The Carrier 3 domain occupies 3731-3804 (TESEYITRTL…KMAVVAQHQT (74 aa)). Residue serine 3765 is modified to O-(pantetheine 4'-phosphoryl)serine. Positions 3875-4278 (TFVLDAEGDL…SQDEKLALLG (404 aa)) are condensation 4. Positions 4288 to 4300 (KLTKLQRVNSPKE) are enriched in polar residues. The disordered stretch occupies residues 4288-4312 (KLTKLQRVNSPKEQTLRKDKPTNGV).

This sequence belongs to the NRP synthetase family.

Its pathway is secondary metabolite biosynthesis. Functionally, nonribosomal peptide synthetase; part of the gene cluster that mediates the biosynthesis of the lipopeptide fusaristatin A. Fusaristatin A consists of a polyketide chain linked to three amino acid residues glutamine (Gln), dehydroalanine (dehydro-Ala), and beta-aminoisobutyric acid. The biosynthesis starts with formation of a linear polyketide chain by the highly reducing polyketide synthase PKS6. The gene cluster does not contain an acyl-CoA ligase or an acyl-transferase, and it is therefore predicted that the polyketide is transferred directly to the nonribosomal peptide synthetase NRPS7. Modules 1-3 from NRPS7 incorporate dehydro-Ala, Gln, and beta-aminoisobutyric acid in the compound, which is released by cyclization. The beta-aminoisobutyric acid units are most likely not freely available to the NRPS, but can be synthesized from thymine, which requires a dehydrogenase, a monooxygenase, and an aminotransferase. The fusaristatin A cluster contains a cytochrome P450 monooxygenase (FGSG_08207) and an aminotransferase (FGSG_17085), which theoretically can perform two of the enzymatic steps. The enzymes may however also be involved in biosynthesis of dehydroalanine or modification of the polyketide. The dehydro-Ala residue can be a result of cyclization, where serine is dehydrated. The last gene of the cluster encodes a protein with an A/B barrel domain found in variable enzymes, which hampers functional prediction. This Gibberella zeae (strain ATCC MYA-4620 / CBS 123657 / FGSC 9075 / NRRL 31084 / PH-1) (Wheat head blight fungus) protein is Nonribosomal peptide synthetase 7.